We begin with the raw amino-acid sequence, 770 residues long: Proton-coupled zinc antiporter SLC30A5 (770 aa).

Residues 1–29 (MEEKYSSQALAGGGVLGPVDVPSARLTRY) lie on the Cytoplasmic side of the membrane. The chain crosses the membrane as a helical span at residues 30-50 (IVLLCFAKFLKAVGLFESYDL). Over 51-53 (LKA) the chain is Lumenal. The helical transmembrane segment at 54–74 (VHLVQFIFIVKLGSAFFMVLF) threads the bilayer. Over 75 to 95 (QKPFSSGKVVTKHQWIKIFKH) the chain is Cytoplasmic. A helical membrane pass occupies residues 96 to 116 (AVVGCIISLLWFFGLTLCGPL). Residue Arg-117 is a topological domain, lumenal. A helical membrane pass occupies residues 118-138 (TLLLFEHSDVVVLSLLSVLFT). Residues 139-149 (SSGGGPAKTRG) are Cytoplasmic-facing. The helical transmembrane segment at 150 to 170 (AAFFIIAVICLLLFDNDDLMA) threads the bilayer. Residues 171–190 (KIAEHPEGHHDSALTHVLYT) are Lumenal-facing. The chain crosses the membrane as a helical span at residues 191–211 (VIAFLGVADHKGGVLLLVLAL). Residues 212–235 (CCKVGFHMASRKLSVDVGGAKRLQ) lie on the Cytoplasmic side of the membrane. The chain crosses the membrane as a helical span at residues 236-256 (ALSHLVSVLLLCPWVIVLSLT). The Lumenal segment spans residues 257–264 (TESKVESW). The helical transmembrane segment at 265–285 (SSLIMPFITVIFFVVILDFYV) threads the bilayer. The Cytoplasmic portion of the chain corresponds to 286–300 (ESICSVKMESSKCAR). A helical transmembrane segment spans residues 301 to 321 (YGSFLIFISALLFGNFWTHPI). The Lumenal portion of the chain corresponds to 322–339 (TDQLRAMNKPAHHESTEH). The helical transmembrane segment at 340-360 (VLSGGVVVSAVFFILSANILS) threads the bilayer. Residues 361–415 (SPSRKGQKGTLIGYSPEGTPLYNFMGDAIQQSSQSLPRFIKESLKQILEEYDSRQ) lie on the Cytoplasmic side of the membrane. The chain crosses the membrane as a helical span at residues 416-436 (IFYFLCLNLAFTFVELFYGVW). Residues 437–445 (TNSLGLISD) lie on the Lumenal side of the membrane. A helical membrane pass occupies residues 446–466 (GFHMLFDCSALVMGLFAALMT). His-448 and Asp-452 together coordinate Zn(2+). At 467 to 480 (RWKATRIFSYGYGR) the chain is on the cytoplasmic side. Residues 481-501 (VEILSGFINGLFLMVIAFFVF) form a helical membrane-spanning segment. Over 502–517 (MESVARLVDPPDIDTN) the chain is Lumenal. A helical transmembrane segment spans residues 518 to 538 (MLTPVSVGGLIVNLVGICAFS). Positions 539-579 (HAHSHGASRGGCHSHEHSHSYHGHSHSHGHGHSHNDHGHSH) are his-rich loop; required for zinc transport. Topologically, residues 539–597 (HAHSHGASRGGCHSHEHSHSYHGHSHSHGHGHSHNDHGHSHGHSHVSSGGGMNTNMRGV) are cytoplasmic. Residues 548–586 (GGCHSHEHSHSYHGHSHSHGHGHSHNDHGHSHGHSHVSS) form a disordered region. Positions 558-570 (SYHGHSHSHGHGH) are enriched in basic residues. Residues 598 to 618 (FLHVLADTLGSVGVIVSTTFI) form a helical membrane-spanning segment. Positions 600 and 604 each coordinate Zn(2+). Topologically, residues 619-622 (QQFG) are lumenal. Residues 623–643 (WLIADPLCSLFIATLIFLSVI) form a helical membrane-spanning segment. Topologically, residues 644 to 770 (PLLKDACQVL…KYYKDGTYIM (127 aa)) are cytoplasmic.

It belongs to the cation diffusion facilitator (CDF) transporter (TC 2.A.4) family. SLC30A subfamily. Heterodimer with SLC30A6/ZNT6; form a functional zinc ion transmembrane transporter.

It is found in the golgi apparatus. Its subcellular location is the golgi stack membrane. It localises to the cytoplasmic vesicle. The protein resides in the COPII-coated vesicle membrane. The protein localises to the secretory vesicle membrane. It is found in the trans-Golgi network membrane. The catalysed reaction is Zn(2+)(in) + 2 H(+)(out) = Zn(2+)(out) + 2 H(+)(in). In terms of biological role, together with SLC30A6 forms a functional proton-coupled zinc ion antiporter mediating zinc entry into the lumen of organelles along the secretory pathway. By contributing to zinc ion homeostasis within the early secretory pathway, regulates the activation and folding of enzymes like alkaline phosphatases and enzymes involved in phosphatidylinositol glycan anchor biosynthesis. In Gallus gallus (Chicken), this protein is Proton-coupled zinc antiporter SLC30A5.